The chain runs to 116 residues: DNA-directed RNA polymerase subunit omega (116 aa).

This sequence belongs to the RNA polymerase subunit omega family. The RNAP catalytic core consists of 2 alpha, 1 beta, 1 beta' and 1 omega subunit. When a sigma factor is associated with the core the holoenzyme is formed, which can initiate transcription.

It carries out the reaction RNA(n) + a ribonucleoside 5'-triphosphate = RNA(n+1) + diphosphate. In terms of biological role, promotes RNA polymerase assembly. Latches the N- and C-terminal regions of the beta' subunit thereby facilitating its interaction with the beta and alpha subunits. This Hyphomonas neptunium (strain ATCC 15444) protein is DNA-directed RNA polymerase subunit omega.